We begin with the raw amino-acid sequence, 210 residues long: MKALKIPEATITRLSIYSRFLKRLDKKGITTVSSGDIAEGVGVSPAQVRKDLAYFGEFGTRGVGYNVKDLIRYTVKILGLSDPWNLVMVGAGNLGSALVTYREFKDRGFSIVGVFDNDLTKIGKRIADMEVLPLEELSRVVKEHNVRIGIIAVPSKAAQDIADIMVKAGLEALLNFAPISLNLPDDVEVRNVDLSVKLEILTFNLALKEK.

Residues Ile16–Phe55 constitute a DNA-binding region (H-T-H motif). An NAD(+)-binding site is contributed by Gly90 to Gly95.

It belongs to the transcriptional regulatory Rex family. In terms of assembly, homodimer.

The protein resides in the cytoplasm. Its function is as follows. Modulates transcription in response to changes in cellular NADH/NAD(+) redox state. The chain is Redox-sensing transcriptional repressor Rex from Desulforamulus reducens (strain ATCC BAA-1160 / DSM 100696 / MI-1) (Desulfotomaculum reducens).